Consider the following 115-residue polypeptide: MKNNISKFPLSFSKSAIKKIKTIISEKNIPNLKFRVYIAGGGCSGFQYKFKFDKNKNKNDTIVNIFNNIIIIDPISLQYLRGGQIDYIENLEGSKFIILNPKAKHTCGCGSSFSI.

Residues Cys43, Cys107, and Cys109 each contribute to the iron-sulfur cluster site.

The protein belongs to the HesB/IscA family. In terms of assembly, homodimer. It depends on iron-sulfur cluster as a cofactor.

In terms of biological role, required for insertion of 4Fe-4S clusters for at least IspG. In Buchnera aphidicola subsp. Baizongia pistaciae (strain Bp), this protein is Iron-sulfur cluster insertion protein ErpA.